The chain runs to 335 residues: Methionine import ATP-binding protein MetN 2 (335 aa).

Positions 2-242 constitute an ABC transporter domain; sequence IEFHDVHKTY…PQHPTTRRFV (241 aa). 38-45 is a binding site for ATP; that stretch reads GHSGAGKS.

This sequence belongs to the ABC transporter superfamily. Methionine importer (TC 3.A.1.24) family. In terms of assembly, the complex is composed of two ATP-binding proteins (MetN), two transmembrane proteins (MetI) and a solute-binding protein (MetQ).

Its subcellular location is the cell inner membrane. The catalysed reaction is L-methionine(out) + ATP + H2O = L-methionine(in) + ADP + phosphate + H(+). It catalyses the reaction D-methionine(out) + ATP + H2O = D-methionine(in) + ADP + phosphate + H(+). In terms of biological role, part of the ABC transporter complex MetNIQ involved in methionine import. Responsible for energy coupling to the transport system. In Pseudomonas aeruginosa (strain UCBPP-PA14), this protein is Methionine import ATP-binding protein MetN 2.